A 96-amino-acid chain; its full sequence is uncharacterized protein (96 aa).

The next 3 membrane-spanning stretches (helical) occupy residues 14–34, 38–58, and 67–87; these read FIEGMSLLILLFIAMPLKYWA, LAVTIVGSVHGGLFILYLLVL, and WPLKWSAAGFIAAFVPFGNFL.

The protein resides in the cell membrane. This is an uncharacterized protein from Bacillus subtilis (strain 168).